Reading from the N-terminus, the 418-residue chain is Light-independent protochlorophyllide reductase subunit N (418 aa).

Residues cysteine 17, cysteine 42, and cysteine 103 each coordinate [4Fe-4S] cluster.

It belongs to the BchN/ChlN family. As to quaternary structure, protochlorophyllide reductase is composed of three subunits; ChlL, ChlN and ChlB. Forms a heterotetramer of two ChlB and two ChlN subunits. [4Fe-4S] cluster serves as cofactor.

It catalyses the reaction chlorophyllide a + oxidized 2[4Fe-4S]-[ferredoxin] + 2 ADP + 2 phosphate = protochlorophyllide a + reduced 2[4Fe-4S]-[ferredoxin] + 2 ATP + 2 H2O. The protein operates within porphyrin-containing compound metabolism; chlorophyll biosynthesis (light-independent). Its function is as follows. Component of the dark-operative protochlorophyllide reductase (DPOR) that uses Mg-ATP and reduced ferredoxin to reduce ring D of protochlorophyllide (Pchlide) to form chlorophyllide a (Chlide). This reaction is light-independent. The NB-protein (ChlN-ChlB) is the catalytic component of the complex. The protein is Light-independent protochlorophyllide reductase subunit N of Prochlorococcus marinus (strain AS9601).